A 358-amino-acid chain; its full sequence is UDP-N-acetylglucosamine--N-acetylmuramyl-(pentapeptide) pyrophosphoryl-undecaprenol N-acetylglucosamine transferase (358 aa).

Residues 11 to 13 (TGG), asparagine 124, arginine 164, serine 195, and glutamine 291 each bind UDP-N-acetyl-alpha-D-glucosamine.

It belongs to the glycosyltransferase 28 family. MurG subfamily.

It is found in the cell inner membrane. The catalysed reaction is di-trans,octa-cis-undecaprenyl diphospho-N-acetyl-alpha-D-muramoyl-L-alanyl-D-glutamyl-meso-2,6-diaminopimeloyl-D-alanyl-D-alanine + UDP-N-acetyl-alpha-D-glucosamine = di-trans,octa-cis-undecaprenyl diphospho-[N-acetyl-alpha-D-glucosaminyl-(1-&gt;4)]-N-acetyl-alpha-D-muramoyl-L-alanyl-D-glutamyl-meso-2,6-diaminopimeloyl-D-alanyl-D-alanine + UDP + H(+). The protein operates within cell wall biogenesis; peptidoglycan biosynthesis. In terms of biological role, cell wall formation. Catalyzes the transfer of a GlcNAc subunit on undecaprenyl-pyrophosphoryl-MurNAc-pentapeptide (lipid intermediate I) to form undecaprenyl-pyrophosphoryl-MurNAc-(pentapeptide)GlcNAc (lipid intermediate II). The chain is UDP-N-acetylglucosamine--N-acetylmuramyl-(pentapeptide) pyrophosphoryl-undecaprenol N-acetylglucosamine transferase from Leptospira borgpetersenii serovar Hardjo-bovis (strain JB197).